Consider the following 115-residue polypeptide: NAD(P)H-quinone oxidoreductase subunit M (115 aa).

Belongs to the complex I NdhM subunit family. NDH-1 can be composed of about 15 different subunits; different subcomplexes with different compositions have been identified which probably have different functions.

The protein localises to the cellular thylakoid membrane. It carries out the reaction a plastoquinone + NADH + (n+1) H(+)(in) = a plastoquinol + NAD(+) + n H(+)(out). It catalyses the reaction a plastoquinone + NADPH + (n+1) H(+)(in) = a plastoquinol + NADP(+) + n H(+)(out). In terms of biological role, NDH-1 shuttles electrons from an unknown electron donor, via FMN and iron-sulfur (Fe-S) centers, to quinones in the respiratory and/or the photosynthetic chain. The immediate electron acceptor for the enzyme in this species is believed to be plastoquinone. Couples the redox reaction to proton translocation, and thus conserves the redox energy in a proton gradient. Cyanobacterial NDH-1 also plays a role in inorganic carbon-concentration. This is NAD(P)H-quinone oxidoreductase subunit M from Prochlorococcus marinus (strain MIT 9515).